The chain runs to 440 residues: N-succinylarginine dihydrolase (440 aa).

Substrate-binding positions include 17-26 (GGLSPGNLAS), Asn108, and 135-136 (HR). Residues 17-37 (GGLSPGNLASQSHVGEPSHPR) are disordered. Glu172 is an active-site residue. Arg210 is a substrate binding site. The active site involves His246. Positions 248 and 358 each coordinate substrate. Catalysis depends on Cys364, which acts as the Nucleophile.

It belongs to the succinylarginine dihydrolase family. Homodimer.

It carries out the reaction N(2)-succinyl-L-arginine + 2 H2O + 2 H(+) = N(2)-succinyl-L-ornithine + 2 NH4(+) + CO2. It functions in the pathway amino-acid degradation; L-arginine degradation via AST pathway; L-glutamate and succinate from L-arginine: step 2/5. Functionally, catalyzes the hydrolysis of N(2)-succinylarginine into N(2)-succinylornithine, ammonia and CO(2). The sequence is that of N-succinylarginine dihydrolase from Myxococcus xanthus (strain DK1622).